A 450-amino-acid chain; its full sequence is Probable ECA polymerase (450 aa).

The next 11 helical transmembrane spans lie at 6–26 (FSGL…LTWF), 37–57 (VFFS…TSVL), 63–83 (VGVA…CFYA), 118–138 (VILM…NGFL), 155–175 (GVAL…VYFL), 181–201 (AWLF…MIVG), 207–227 (IIIA…ISLW), 228–248 (MLAA…LKRY), 341–361 (LVVM…GLII), 378–398 (YKAA…IVLA), and 410–430 (VFFI…YWLF).

This sequence belongs to the WzyE family. Probably part of a complex composed of WzxE, WzyE and WzzE.

The protein localises to the cell inner membrane. Its pathway is bacterial outer membrane biogenesis; enterobacterial common antigen biosynthesis. Its function is as follows. Probably involved in the polymerization of enterobacterial common antigen (ECA) trisaccharide repeat units. The protein is Probable ECA polymerase of Escherichia coli O17:K52:H18 (strain UMN026 / ExPEC).